Here is a 215-residue protein sequence, read N- to C-terminus: Cytochrome b6 (215 aa).

Residues 32–52 (IFYCIGGITFTCFIMQVASGF) form a helical membrane-spanning segment. Residue C35 participates in heme c binding. Residues H86 and H100 each coordinate heme b. 3 helical membrane passes run 90–110 (ASMM…TGGF), 116–136 (LTWV…VTGY), and 186–206 (LHTF…FLMI). Heme b is bound by residues H187 and H202.

This sequence belongs to the cytochrome b family. PetB subfamily. The 4 large subunits of the cytochrome b6-f complex are cytochrome b6, subunit IV (17 kDa polypeptide, PetD), cytochrome f and the Rieske protein, while the 4 small subunits are PetG, PetL, PetM and PetN. The complex functions as a dimer. The cofactor is heme b. Heme c is required as a cofactor.

It localises to the plastid. The protein resides in the chloroplast thylakoid membrane. In terms of biological role, component of the cytochrome b6-f complex, which mediates electron transfer between photosystem II (PSII) and photosystem I (PSI), cyclic electron flow around PSI, and state transitions. The sequence is that of Cytochrome b6 from Mesostigma viride (Green alga).